Reading from the N-terminus, the 67-residue chain is Large ribosomal subunit protein uL29 (67 aa).

This sequence belongs to the universal ribosomal protein uL29 family.

This is Large ribosomal subunit protein uL29 from Ehrlichia ruminantium (strain Gardel).